A 441-amino-acid chain; its full sequence is Serine/threonine-protein kinase prk-2 (441 aa).

Residues 31 to 285 (YKLKAELGRG…LEAILNHPWV (255 aa)) form the Protein kinase domain. ATP-binding positions include 37–45 (LGRGGFGVV) and Lys60. Residue Asp158 is the Proton acceptor of the active site. Positions 301–364 (QKKTSESSDD…NQKKPNHKEF (64 aa)) are disordered. Positions 303-320 (KTSESSDDHHSETLGDHS) are enriched in basic and acidic residues. The segment covering 328 to 338 (PPTSSVSQQPG) has biased composition (polar residues).

Belongs to the protein kinase superfamily. Ser/Thr protein kinase family. PIM subfamily. Mg(2+) serves as cofactor.

It catalyses the reaction L-seryl-[protein] + ATP = O-phospho-L-seryl-[protein] + ADP + H(+). The enzyme catalyses L-threonyl-[protein] + ATP = O-phospho-L-threonyl-[protein] + ADP + H(+). Involved in the negative regulation of synaptic differentiation in PLM neurons. The sequence is that of Serine/threonine-protein kinase prk-2 from Caenorhabditis elegans.